The following is a 480-amino-acid chain: UDP-N-acetylmuramate--L-alanine ligase (480 aa).

125-131 (GTHGKTT) provides a ligand contact to ATP.

Belongs to the MurCDEF family.

It is found in the cytoplasm. The enzyme catalyses UDP-N-acetyl-alpha-D-muramate + L-alanine + ATP = UDP-N-acetyl-alpha-D-muramoyl-L-alanine + ADP + phosphate + H(+). It functions in the pathway cell wall biogenesis; peptidoglycan biosynthesis. Its function is as follows. Cell wall formation. This Ectopseudomonas mendocina (strain ymp) (Pseudomonas mendocina) protein is UDP-N-acetylmuramate--L-alanine ligase.